The sequence spans 1439 residues: ABC transporter G family member 14 (1439 aa).

Over residues 1–17 the composition is skewed to basic and acidic residues; that stretch reads MEENSNKFEQELKEIGQ. Residues 1 to 21 are disordered; it reads MEENSNKFEQELKEIGQDRNQ. Positions 117–370 constitute an ABC transporter 1 domain; it reads FSILNFFKPS…FMSLGFDCEP (254 aa). The region spanning 475–700 is the ABC transmembrane type-2 1 domain; it reads LNDKFGLFTK…GSEFDAYRIC (226 aa). A run of 6 helical transmembrane segments spans residues 479–499, 516–536, 564–584, 589–609, 614–634, and 734–754; these read FGLF…SSVF, ILSA…MTFI, IPFT…MFGL, GKFF…TALF, YLCP…IFML, and IIVY…MEYI. The ABC transporter 2 domain occupies 805 to 1049; sequence FTWQNIRYTV…LTSYFERHGV (245 aa). 841–848 is a binding site for ATP; sequence GSSGAGKT. The ABC transmembrane type-2 2 domain occupies 1141–1366; sequence YYTYGSFVQS…YNTCQNYTSA (226 aa). The next 6 membrane-spanning stretches (helical) occupy residues 1144-1164, 1175-1195, 1217-1237, 1256-1276, 1283-1303, and 1413-1433; these read YGSF…FWNL, IFFI…VMPQ, FAIS…TIFF, FYFW…GQAV, MFFA…FSGV, and VGII…FVYL.

It belongs to the ABC transporter superfamily. ABCG family. PDR (TC 3.A.1.205) subfamily.

It is found in the membrane. This is ABC transporter G family member 14 (abcG14) from Dictyostelium discoideum (Social amoeba).